The primary structure comprises 341 residues: Phosphate acyltransferase (341 aa).

This sequence belongs to the PlsX family. In terms of assembly, homodimer. Probably interacts with PlsY.

It localises to the cytoplasm. It catalyses the reaction a fatty acyl-[ACP] + phosphate = an acyl phosphate + holo-[ACP]. It functions in the pathway lipid metabolism; phospholipid metabolism. Its function is as follows. Catalyzes the reversible formation of acyl-phosphate (acyl-PO(4)) from acyl-[acyl-carrier-protein] (acyl-ACP). This enzyme utilizes acyl-ACP as fatty acyl donor, but not acyl-CoA. The polypeptide is Phosphate acyltransferase (Vibrio vulnificus (strain CMCP6)).